The primary structure comprises 537 residues: Chaperonin GroEL (537 aa).

ATP contacts are provided by residues 29 to 32 (TLGP), 86 to 90 (DGTTT), G413, 477 to 479 (NAA), and D493.

This sequence belongs to the chaperonin (HSP60) family. As to quaternary structure, forms a cylinder of 14 subunits composed of two heptameric rings stacked back-to-back. Interacts with the co-chaperonin GroES.

It is found in the cytoplasm. The catalysed reaction is ATP + H2O + a folded polypeptide = ADP + phosphate + an unfolded polypeptide.. Together with its co-chaperonin GroES, plays an essential role in assisting protein folding. The GroEL-GroES system forms a nano-cage that allows encapsulation of the non-native substrate proteins and provides a physical environment optimized to promote and accelerate protein folding. The chain is Chaperonin GroEL from Lactobacillus delbrueckii subsp. bulgaricus (strain ATCC 11842 / DSM 20081 / BCRC 10696 / JCM 1002 / NBRC 13953 / NCIMB 11778 / NCTC 12712 / WDCM 00102 / Lb 14).